A 285-amino-acid chain; its full sequence is Bifunctional protein FolD (285 aa).

Residues 165 to 167 (GRG), Thr-192, and Val-233 contribute to the NADP(+) site.

It belongs to the tetrahydrofolate dehydrogenase/cyclohydrolase family. In terms of assembly, homodimer.

The enzyme catalyses (6R)-5,10-methylene-5,6,7,8-tetrahydrofolate + NADP(+) = (6R)-5,10-methenyltetrahydrofolate + NADPH. The catalysed reaction is (6R)-5,10-methenyltetrahydrofolate + H2O = (6R)-10-formyltetrahydrofolate + H(+). Its pathway is one-carbon metabolism; tetrahydrofolate interconversion. Functionally, catalyzes the oxidation of 5,10-methylenetetrahydrofolate to 5,10-methenyltetrahydrofolate and then the hydrolysis of 5,10-methenyltetrahydrofolate to 10-formyltetrahydrofolate. This chain is Bifunctional protein FolD, found in Mycobacterium sp. (strain MCS).